The chain runs to 762 residues: Probable inorganic carbon transporter subunit DabA (762 aa).

Zn(2+) is bound by residues Cys-279, Asp-281, His-461, and Cys-476.

Belongs to the inorganic carbon transporter (TC 9.A.2) DabA family. As to quaternary structure, forms a complex with DabB. It depends on Zn(2+) as a cofactor.

It is found in the cell inner membrane. Part of an energy-coupled inorganic carbon pump. The chain is Probable inorganic carbon transporter subunit DabA from Legionella pneumophila subsp. pneumophila (strain Philadelphia 1 / ATCC 33152 / DSM 7513).